A 393-amino-acid polypeptide reads, in one-letter code: Metal tolerance protein A2 (393 aa).

Residues 1–72 (MVTPKLHLDL…EAQERAASMR (72 aa)) lie on the Cytoplasmic side of the membrane. The helical transmembrane segment at 73–93 (KLLIAVLLCAIFIVVEVVGGI) threads the bilayer. Residues 94-105 (KANSLAILTDAA) lie on the Vacuolar side of the membrane. The chain crosses the membrane as a helical span at residues 106-126 (HLLSDVAAFAISLFSLWASGW). Residues 127–138 (KANPQQSYGFFR) lie on the Cytoplasmic side of the membrane. A helical transmembrane segment spans residues 139–159 (IEILGALVSIQMIWLLAGILV). The Vacuolar portion of the chain corresponds to 160–176 (YEAIVRLNNGSGEVEGS). The chain crosses the membrane as a helical span at residues 177–197 (LMFAVSAVGLLVNIAMAILLG). Residues 198-233 (HDHGHGHGHSHDNGHGHSHDHGHGIAATEHHHDSGH) form a required for zinc-binding region. The Cytoplasmic segment spans residues 198-257 (HDHGHGHGHSHDNGHGHSHDHGHGIAATEHHHDSGHDESQLSDVLIEQKKQRNVNIQGAY). The segment covering 202–236 (HGHGHSHDNGHGHSHDHGHGIAATEHHHDSGHDES) has biased composition (basic and acidic residues). The tract at residues 202-237 (HGHGHSHDNGHGHSHDHGHGIAATEHHHDSGHDESQ) is disordered. Residues 258–278 (LHVLGDSIQSVGVMIGGAIIW) form a helical membrane-spanning segment. The Vacuolar segment spans residues 279–284 (YKPEWK). Residues 285–305 (ILDLICTLVFSVIVLGTTIGM) traverse the membrane as a helical segment. The Cytoplasmic portion of the chain corresponds to 306–393 (LRNILEVLME…SHVTIQIERQ (88 aa)).

The protein belongs to the cation diffusion facilitator (CDF) transporter (TC 2.A.4) family. SLC30A subfamily.

It localises to the membrane. Functionally, involved in sequestration of excess zinc in the cytoplasm into vacuoles to maintain zinc homeostasis. The chain is Metal tolerance protein A2 (MTPA2) from Arabidopsis thaliana (Mouse-ear cress).